The sequence spans 704 residues: Elongation factor G (704 aa).

In terms of domain architecture, tr-type G spans 8–290; sequence ARYRNIGISA…AVIDYLPSPV (283 aa). GTP contacts are provided by residues 17–24, 88–92, and 142–145; these read AHIDAGKT, DTPGH, and NKMD.

It belongs to the TRAFAC class translation factor GTPase superfamily. Classic translation factor GTPase family. EF-G/EF-2 subfamily.

The protein resides in the cytoplasm. Its function is as follows. Catalyzes the GTP-dependent ribosomal translocation step during translation elongation. During this step, the ribosome changes from the pre-translocational (PRE) to the post-translocational (POST) state as the newly formed A-site-bound peptidyl-tRNA and P-site-bound deacylated tRNA move to the P and E sites, respectively. Catalyzes the coordinated movement of the two tRNA molecules, the mRNA and conformational changes in the ribosome. This Salmonella arizonae (strain ATCC BAA-731 / CDC346-86 / RSK2980) protein is Elongation factor G.